An 80-amino-acid polypeptide reads, in one-letter code: Centromere protein X (80 aa).

This sequence belongs to the CENP-X/MHF2 family. Heterodimer with CENPX, sometimes called MHF; this interaction stabilizes both partners. MHF heterodimers can assemble to form tetrameric structures. MHF also coassemble with CENPT-CENPW heterodimers at centromeres to form the tetrameric CENP-T-W-S-X complex. Forms a discrete complex with FANCM and CENPX, called FANCM-MHF; this interaction, probably mediated by direct binding between CENPS and FANCM, leads to synergistic activation of double-stranded DNA binding and strongly stimulates FANCM-mediated DNA remodeling. Recruited by FANCM to the Fanconi anemia (FA) core complex, which consists of CENPS, CENPX, FANCA, FANCB, FANCC, FANCE, FANCF, FANCG, FANCL, FANCM, FAAP24 and FAAP100. The FA core complex associates with Bloom syndrome (BLM) complex, which consists of at least BLM, DNA topoisomerase 3-alpha (TOP3A), RMI1/BLAP75, RPA1/RPA70 and RPA2/RPA32. The super complex between FA and BLM is called BRAFT.

Its subcellular location is the nucleus. The protein resides in the chromosome. The protein localises to the centromere. It is found in the kinetochore. DNA-binding component of the Fanconi anemia (FA) core complex. Required for the normal activation of the FA pathway, leading to monoubiquitination of the FANCI-FANCD2 complex in response to DNA damage, cellular resistance to DNA cross-linking drugs, and prevention of chromosomal breakage. In complex with CENPS (MHF heterodimer), crucial cofactor for FANCM in both binding and ATP-dependent remodeling of DNA. Stabilizes FANCM. In complex with CENPS and FANCM (but not other FANC proteins), rapidly recruited to blocked forks and promotes gene conversion at blocked replication forks. In complex with CENPS, CENPT and CENPW (CENP-T-W-S-X heterotetramer), involved in the formation of a functional kinetochore outer plate, which is essential for kinetochore-microtubule attachment and faithful mitotic progression. As a component of MHF and CENP-T-W-S-X complexes, binds DNA and bends it to form a nucleosome-like structure. DNA-binding function is fulfilled in the presence of CENPS, with the following preference for DNA substates: Holliday junction &gt; double-stranded &gt; splay arm &gt; single-stranded. Does not bind DNA on its own. The polypeptide is Centromere protein X (CENPX) (Gallus gallus (Chicken)).